The sequence spans 285 residues: Protease HtpX homolog (285 aa).

The next 2 helical transmembrane spans lie at 7 to 27 (TAML…MIGG) and 30 to 50 (GMTI…WFSD). His131 serves as a coordination point for Zn(2+). Glu132 is an active-site residue. A Zn(2+)-binding site is contributed by His135. The next 2 membrane-spanning stretches (helical) occupy residues 146–166 (ISAT…FFGG) and 177–197 (IAGI…QMAI). Residue Glu202 coordinates Zn(2+).

It belongs to the peptidase M48B family. Requires Zn(2+) as cofactor.

It is found in the cell inner membrane. In Burkholderia thailandensis (strain ATCC 700388 / DSM 13276 / CCUG 48851 / CIP 106301 / E264), this protein is Protease HtpX homolog.